We begin with the raw amino-acid sequence, 113 residues long: uncharacterized protein (113 aa).

This is an uncharacterized protein from Acanthamoeba polyphaga mimivirus (APMV).